A 304-amino-acid chain; its full sequence is Glycine--tRNA ligase alpha subunit (304 aa).

Belongs to the class-II aminoacyl-tRNA synthetase family. In terms of assembly, tetramer of two alpha and two beta subunits.

It localises to the cytoplasm. The catalysed reaction is tRNA(Gly) + glycine + ATP = glycyl-tRNA(Gly) + AMP + diphosphate. The sequence is that of Glycine--tRNA ligase alpha subunit from Yersinia pseudotuberculosis serotype O:1b (strain IP 31758).